We begin with the raw amino-acid sequence, 1103 residues long: Ataxin-2 homolog (1103 aa).

The span at 1-10 shows a compositional bias: basic residues; sequence MSQSKDKKKF. A disordered region spans residues 1–75; that stretch reads MSQSKDKKKF…QQQQQQQQPF (75 aa). Residues 11–28 show a composition bias toward gly residues; it reads VGGGGGGGGNNSGGGGYG. 2 stretches are compositionally biased toward low complexity: residues 33–44 and 56–73; these read NNNNNNRNSSNN and HHQQ…QQQQ. Positions 84–166 constitute a Sm domain; the sequence is RTVFMSMSLV…FLQITATGVV (83 aa). The stretch at 258-287 forms a coiled coil; sequence EFYKINQSVAEKKAQEIENEKSGNIHLLEE. 5 disordered regions span residues 305-474, 516-557, 615-763, 901-920, and 930-1103; these read VVRK…RESP, TNKS…APKS, LVIK…NNTT, HTMK…VQPQ, and QPQG…NQYH. A compositionally biased stretch (low complexity) spans 312–356; that stretch reads PTSTTSTTTSPPTQNPTPSSSVYIPPSKRNNNNNTPSTPSVTSPP. Over residues 358 to 371 the composition is skewed to basic and acidic residues; that stretch reads VDKKHQQTHQDKKQ. A coiled-coil region spans residues 366-403; that stretch reads HQDKKQTQQQQQQQQQQQQQQQQQQQQQQQQQQQQQTQ. A compositionally biased stretch (low complexity) spans 372 to 463; that stretch reads TQQQQQQQQQ…NNTPTATNTN (92 aa). The span at 516-529 shows a compositional bias: polar residues; that stretch reads TNKSMNKSGSNIST. 3 stretches are compositionally biased toward low complexity: residues 530–544, 637–676, and 683–694; these read TPVN…NGTP, PTQL…TPST, and TTTPITTTILTE. The stretch at 691–730 forms a coiled coil; sequence ILTENKSDDKEKEKEKEKEKVDEKEKEKEKEKSDEKDKDQ. Residues 695–741 are compositionally biased toward basic and acidic residues; the sequence is NKSDDKEKEKEKEKEKVDEKEKEKEKEKSDEKDKDQSSTLVEKKDES. The span at 742-763 shows a compositional bias: low complexity; the sequence is SSSSNTTTTTTNTTNNNNNNTT. Low complexity predominate over residues 930-957; the sequence is QPQGGVVQPSAGGAPKTMYQQQQQQQQQ. Over residues 960-969 the composition is skewed to gly residues; that stretch reads QPGGPMGVQR. A compositionally biased stretch (low complexity) spans 974-984; the sequence is PPQQQPQQQQQ. Positions 1020 to 1031 are enriched in pro residues; the sequence is YAVPHPQYPMPP. Positions 1062-1076 are enriched in low complexity; it reads QVVSQNSPQQDSPSN.

This sequence belongs to the ataxin-2 family.

This chain is Ataxin-2 homolog (atxn2), found in Dictyostelium discoideum (Social amoeba).